The sequence spans 339 residues: Lipoate-protein ligase A (339 aa).

One can recognise a BPL/LPL catalytic domain in the interval 29-216; the sequence is DPSQQVLFLW…SFENFYAGKA (188 aa). ATP is bound by residues Arg-71, 76–79, and Lys-134; that span reads GAVF. Lys-134 provides a ligand contact to (R)-lipoate.

The protein belongs to the LplA family. As to quaternary structure, monomer.

It is found in the cytoplasm. The catalysed reaction is L-lysyl-[lipoyl-carrier protein] + (R)-lipoate + ATP = N(6)-[(R)-lipoyl]-L-lysyl-[lipoyl-carrier protein] + AMP + diphosphate + H(+). It participates in protein modification; protein lipoylation via exogenous pathway; protein N(6)-(lipoyl)lysine from lipoate: step 1/2. The protein operates within protein modification; protein lipoylation via exogenous pathway; protein N(6)-(lipoyl)lysine from lipoate: step 2/2. In terms of biological role, catalyzes both the ATP-dependent activation of exogenously supplied lipoate to lipoyl-AMP and the transfer of the activated lipoyl onto the lipoyl domains of lipoate-dependent enzymes. This chain is Lipoate-protein ligase A, found in Bdellovibrio bacteriovorus (strain ATCC 15356 / DSM 50701 / NCIMB 9529 / HD100).